Reading from the N-terminus, the 88-residue chain is Long neurotoxin 20 (88 aa).

The signal sequence occupies residues M1 to S21. Intrachain disulfides connect C24–C42, C35–C63, C48–C52, C67–C78, and C79–C84.

The protein belongs to the three-finger toxin family. Long-chain subfamily. Type II alpha-neurotoxin sub-subfamily. As to expression, expressed by the venom gland.

It is found in the secreted. Its function is as follows. Binds with high affinity to muscular (alpha-1/CHRNA1) and neuronal (alpha-7/CHRNA7) nicotinic acetylcholine receptor (nAChR) and inhibits acetylcholine from binding to the receptor, thereby impairing neuromuscular and neuronal transmission. In Drysdalia coronoides (White-lipped snake), this protein is Long neurotoxin 20.